We begin with the raw amino-acid sequence, 735 residues long: Catalase-peroxidase (735 aa).

2 stretches are compositionally biased toward polar residues: residues 1 to 10 (MENQNRQNAA) and 17 to 26 (SVTNQSSNRT). A disordered region spans residues 1–30 (MENQNRQNAAQCPFHGSVTNQSSNRTTNKD). The segment at residues 100–223 (WHSAGTYRIG…LAAVQMGLIY (124 aa)) is a cross-link (tryptophyl-tyrosyl-methioninium (Trp-Tyr) (with M-249)). Histidine 101 functions as the Proton acceptor in the catalytic mechanism. Positions 223–249 (YVNPEGPDGKPDPKAAARDIRETFRRM) form a cross-link, tryptophyl-tyrosyl-methioninium (Tyr-Met) (with W-100). Histidine 264 contacts heme b.

This sequence belongs to the peroxidase family. Peroxidase/catalase subfamily. As to quaternary structure, homodimer or homotetramer. It depends on heme b as a cofactor. Formation of the three residue Trp-Tyr-Met cross-link is important for the catalase, but not the peroxidase activity of the enzyme.

The catalysed reaction is H2O2 + AH2 = A + 2 H2O. The enzyme catalyses 2 H2O2 = O2 + 2 H2O. Bifunctional enzyme with both catalase and broad-spectrum peroxidase activity. Also displays NADH oxidase, INH lyase and isonicotinoyl-NAD synthase activities. This chain is Catalase-peroxidase, found in Geobacillus stearothermophilus (Bacillus stearothermophilus).